Here is a 282-residue protein sequence, read N- to C-terminus: tRNA (guanine-N(7)-)-methyltransferase (282 aa).

Positions 1-29 (MPHAPAKRQKREEYKNALHEDESNAALPK) are disordered. Over residues 10 to 22 (KREEYKNALHEDE) the composition is skewed to basic and acidic residues. Residues Gly-104, 153-154 (NT), and Cys-173 each bind S-adenosyl-L-methionine. Residue Asp-176 is part of the active site. Residue 255-257 (TEE) participates in S-adenosyl-L-methionine binding.

Belongs to the class I-like SAM-binding methyltransferase superfamily. TrmB family. As to quaternary structure, forms a complex with TRM82.

Its subcellular location is the nucleus. It carries out the reaction guanosine(46) in tRNA + S-adenosyl-L-methionine = N(7)-methylguanosine(46) in tRNA + S-adenosyl-L-homocysteine. It participates in tRNA modification; N(7)-methylguanine-tRNA biosynthesis. Catalyzes the formation of N(7)-methylguanine at position 46 (m7G46) in tRNA. The protein is tRNA (guanine-N(7)-)-methyltransferase of Phaeosphaeria nodorum (strain SN15 / ATCC MYA-4574 / FGSC 10173) (Glume blotch fungus).